The following is a 230-amino-acid chain: Large ribosomal subunit protein uL1 (230 aa).

This sequence belongs to the universal ribosomal protein uL1 family. In terms of assembly, part of the 50S ribosomal subunit.

Binds directly to 23S rRNA. The L1 stalk is quite mobile in the ribosome, and is involved in E site tRNA release. In terms of biological role, protein L1 is also a translational repressor protein, it controls the translation of the L11 operon by binding to its mRNA. The protein is Large ribosomal subunit protein uL1 of Bifidobacterium adolescentis (strain ATCC 15703 / DSM 20083 / NCTC 11814 / E194a).